The following is a 489-amino-acid chain: Rhamnulokinase (489 aa).

ATP is bound at residue alanine 13–arginine 17. An intrachain disulfide couples cysteine 68 to cysteine 222. Residues glycine 83 and histidine 236 to threonine 238 each bind substrate. Aspartate 237 functions as the Proton acceptor in the catalytic mechanism. Threonine 259 provides a ligand contact to ATP. Asparagine 296 contributes to the substrate binding site. Residue glutamine 304 coordinates ATP. A disulfide bond links cysteine 353 and cysteine 370. Residue glycine 402 participates in ATP binding. A disulfide bond links cysteine 413 and cysteine 417.

This sequence belongs to the rhamnulokinase family. In terms of assembly, monomer. It depends on Mg(2+) as a cofactor.

The enzyme catalyses L-rhamnulose + ATP = L-rhamnulose 1-phosphate + ADP + H(+). Its pathway is carbohydrate degradation; L-rhamnose degradation; glycerone phosphate from L-rhamnose: step 2/3. Functionally, involved in the catabolism of L-rhamnose (6-deoxy-L-mannose). Catalyzes the transfer of the gamma-phosphate group from ATP to the 1-hydroxyl group of L-rhamnulose to yield L-rhamnulose 1-phosphate. The protein is Rhamnulokinase of Escherichia fergusonii (strain ATCC 35469 / DSM 13698 / CCUG 18766 / IAM 14443 / JCM 21226 / LMG 7866 / NBRC 102419 / NCTC 12128 / CDC 0568-73).